A 329-amino-acid polypeptide reads, in one-letter code: Replication factor C small subunit 1 (329 aa).

44–51 is an ATP binding site; sequence GPPGTGKT.

The protein belongs to the activator 1 small subunits family. RfcS subfamily. As to quaternary structure, heteromultimer composed of small subunits (RfcS) and large subunits (RfcL).

Part of the RFC clamp loader complex which loads the PCNA sliding clamp onto DNA. This chain is Replication factor C small subunit 1, found in Pyrobaculum islandicum (strain DSM 4184 / JCM 9189 / GEO3).